Here is a 73-residue protein sequence, read N- to C-terminus: RNA-binding protein Hfq (73 aa).

Positions 8–68 constitute a Sm domain; the sequence is DQFLNQIRKD…ISTFAPQKNV (61 aa).

It belongs to the Hfq family. In terms of assembly, homohexamer.

In terms of biological role, RNA chaperone that binds small regulatory RNA (sRNAs) and mRNAs to facilitate mRNA translational regulation in response to envelope stress, environmental stress and changes in metabolite concentrations. Also binds with high specificity to tRNAs. The chain is RNA-binding protein Hfq from Bacillus velezensis (strain DSM 23117 / BGSC 10A6 / LMG 26770 / FZB42) (Bacillus amyloliquefaciens subsp. plantarum).